A 437-amino-acid chain; its full sequence is O-acetyl-L-homoserine sulfhydrylase (437 aa).

At Lys216 the chain carries N6-(pyridoxal phosphate)lysine.

Belongs to the trans-sulfuration enzymes family. Homohexamer. The cofactor is pyridoxal 5'-phosphate.

The catalysed reaction is O-acetyl-L-homoserine + hydrogen sulfide = L-homocysteine + acetate. The enzyme catalyses O-acetyl-L-homoserine + methanethiol = L-methionine + acetate + H(+). It participates in amino-acid biosynthesis; L-methionine biosynthesis via de novo pathway; L-homocysteine from O-acetyl-L-homoserine: step 1/1. With respect to regulation, inhibited by methionine and cystathionine. Functionally, catalyzes the conversion of O-acetyl-L-homoserine (OAH) into homocysteine in the methionine biosynthesis pathway. Can also use dimethyldisulfide and methanethiol as reduced sulfur sources, leading to the direct formation of methionine. Has weak cystathionine gamma-synthase activity. The polypeptide is O-acetyl-L-homoserine sulfhydrylase (Corynebacterium glutamicum (strain ATCC 13032 / DSM 20300 / JCM 1318 / BCRC 11384 / CCUG 27702 / LMG 3730 / NBRC 12168 / NCIMB 10025 / NRRL B-2784 / 534)).